The sequence spans 367 residues: Putative methylthioribose-1-phosphate isomerase (367 aa).

Residues R65 to A67, R106, and Q218 contribute to the substrate site. Residue D259 is the Proton donor of the active site. Position 269–270 (N269–K270) interacts with substrate.

This sequence belongs to the eIF-2B alpha/beta/delta subunits family. MtnA subfamily.

It carries out the reaction 5-(methylsulfanyl)-alpha-D-ribose 1-phosphate = 5-(methylsulfanyl)-D-ribulose 1-phosphate. Its function is as follows. Catalyzes the interconversion of methylthioribose-1-phosphate (MTR-1-P) into methylthioribulose-1-phosphate (MTRu-1-P). The protein is Putative methylthioribose-1-phosphate isomerase of Sulfolobus acidocaldarius (strain ATCC 33909 / DSM 639 / JCM 8929 / NBRC 15157 / NCIMB 11770).